The chain runs to 530 residues: Phosphoenolpyruvate carboxykinase (ATP) (530 aa).

Residues Arg60, Tyr195, and Lys201 each contribute to the substrate site. Residues Lys201, His221, and 237-245 (GLSGTGKTT) each bind ATP. Mn(2+)-binding residues include Lys201 and His221. Asp258 lines the Mn(2+) pocket. 3 residues coordinate ATP: Glu286, Arg324, and Ser449. Residue Arg324 participates in substrate binding.

It belongs to the phosphoenolpyruvate carboxykinase (ATP) family. Mn(2+) is required as a cofactor.

It is found in the cytoplasm. It carries out the reaction oxaloacetate + ATP = phosphoenolpyruvate + ADP + CO2. Its pathway is carbohydrate biosynthesis; gluconeogenesis. Its function is as follows. Involved in the gluconeogenesis. Catalyzes the conversion of oxaloacetate (OAA) to phosphoenolpyruvate (PEP) through direct phosphoryl transfer between the nucleoside triphosphate and OAA. This Geobacter metallireducens (strain ATCC 53774 / DSM 7210 / GS-15) protein is Phosphoenolpyruvate carboxykinase (ATP).